The following is a 660-amino-acid chain: Pescadillo homolog (660 aa).

Disordered regions lie at residues 313–358 (VESD…SYSS) and 471–660 (PELY…EKKA). Over residues 331-342 (EEKPSDAIDKFE) the composition is skewed to basic and acidic residues. The region spanning 360 to 476 (DPAQLFSRLT…ELKSPELYGP (117 aa)) is the BRCT domain. Residues 501-659 (LEEQQSEGEA…KRRRLEKEKK (159 aa)) adopt a coiled-coil conformation. Residues 504–566 (QQSEGEAIDA…EEGSEDEEES (63 aa)) show a composition bias toward acidic residues. The segment covering 584-619 (VKGDKKMDAKTKAKLEAKKALERKKKSEAEDLERAK) has biased composition (basic and acidic residues).

It belongs to the pescadillo family. In terms of assembly, component of the NOP7 complex, composed of ERB1, NOP7 and YTM1. The complex is held together by ERB1, which interacts with NOP7 via its N-terminal domain and with YTM1 via a high-affinity interaction between the seven-bladed beta-propeller domains of the 2 proteins. The NOP7 complex associates with the 66S pre-ribosome.

It is found in the nucleus. The protein resides in the nucleolus. It localises to the nucleoplasm. Component of the NOP7 complex, which is required for maturation of the 25S and 5.8S ribosomal RNAs and formation of the 60S ribosome. The polypeptide is Pescadillo homolog (Chaetomium globosum (strain ATCC 6205 / CBS 148.51 / DSM 1962 / NBRC 6347 / NRRL 1970) (Soil fungus)).